The primary structure comprises 1642 residues: Cholesterol transporter ABCA5 (1642 aa).

The chain crosses the membrane as a helical span at residues S32–M52. N-linked (GlcNAc...) asparagine glycosylation is present at N86. 5 helical membrane passes run V220–I240, L264–I284, I297–L317, G328–I348, and L355–M375. An N-linked (GlcNAc...) asparagine glycan is attached at N388. The chain crosses the membrane as a helical span at residues L396 to Y416. N458 carries N-linked (GlcNAc...) asparagine glycosylation. Residues I478–Y713 form the ABC transporter 1 domain. G514 to S521 serves as a coordination point for ATP. The chain crosses the membrane as a helical span at residues A864–H884. A glycan (N-linked (GlcNAc...) asparagine) is linked at N919. Residues V967–I987 traverse the membrane as a helical segment. Residue N996 is glycosylated (N-linked (GlcNAc...) asparagine). A run of 6 helical transmembrane segments spans residues L1021–M1041, V1071–F1091, F1102–I1122, S1138–L1158, A1164–I1184, and L1207–H1227. The 244-residue stretch at I1290 to K1533 folds into the ABC transporter 2 domain. G1333 to S1340 provides a ligand contact to ATP.

The protein belongs to the ABC transporter superfamily. ABCA family. N-glycosylated. In terms of tissue distribution, expressed in cardiomyocytes, oligodendrocytes and astrocytes in brain, alveolar type 2 cells in lung and follicular cells in the thyroid gland (at protein level). Detected in brain, testis, lung, heart, liver, kidney, skeletal muscle and placenta. Strongly expressed in the basal cells of the seminiferous tubules, interstitial cells consisting of Leydig cells, as well as the tunica albuginea. In the epididymis, specifically and very strongly expressed in the connective tissue outlining the cylindrical epithelium in the corpus and cauda regions, including fibrocytes and smooth muscle cells, as well as within the basal and tall columnar cells of the corpus cylindrical epithelium. Highly expressed in the brain with high expression in cortical and hippocampal neurons and moderately in the lung.

It localises to the golgi apparatus membrane. The protein resides in the lysosome membrane. Its subcellular location is the late endosome membrane. The protein localises to the cell membrane. The enzyme catalyses cholesterol(in) + ATP + H2O = cholesterol(out) + ADP + phosphate + H(+). In terms of biological role, cholesterol efflux transporter in macrophages that is responsible for APOAI/high-density lipoproteins (HDL) formation at the plasma membrane under high cholesterol levels and participates in reverse cholesterol transport. May play a role in the processing of autolysosomes. The protein is Cholesterol transporter ABCA5 of Mus musculus (Mouse).